A 375-amino-acid chain; its full sequence is Chaperone protein DnaJ (375 aa).

Residues 5–70 (DYYEVLGVER…GKRMAYDQYG (66 aa)) form the J domain. A CR-type zinc finger spans residues 134–212 (GTTVTIRVPT…CHGQGRVEEH (79 aa)). Positions 147, 150, 164, 167, 186, 189, 200, and 203 each coordinate Zn(2+). CXXCXGXG motif repeat units follow at residues 147-154 (CKTCDGSG), 164-171 (CTTCGGIG), 186-193 (CPRCHGSG), and 200-207 (CPDCHGQG).

It belongs to the DnaJ family. Homodimer. Zn(2+) is required as a cofactor.

The protein localises to the cytoplasm. In terms of biological role, participates actively in the response to hyperosmotic and heat shock by preventing the aggregation of stress-denatured proteins and by disaggregating proteins, also in an autonomous, DnaK-independent fashion. Unfolded proteins bind initially to DnaJ; upon interaction with the DnaJ-bound protein, DnaK hydrolyzes its bound ATP, resulting in the formation of a stable complex. GrpE releases ADP from DnaK; ATP binding to DnaK triggers the release of the substrate protein, thus completing the reaction cycle. Several rounds of ATP-dependent interactions between DnaJ, DnaK and GrpE are required for fully efficient folding. Also involved, together with DnaK and GrpE, in the DNA replication of plasmids through activation of initiation proteins. This chain is Chaperone protein DnaJ, found in Azotobacter vinelandii (strain DJ / ATCC BAA-1303).